A 200-amino-acid polypeptide reads, in one-letter code: Large ribosomal subunit protein uL4 (200 aa).

The tract at residues 42 to 65 is disordered; the sequence is TRAHKSRADVSGGGKKPFRQKGTG.

The protein belongs to the universal ribosomal protein uL4 family. As to quaternary structure, part of the 50S ribosomal subunit.

Functionally, one of the primary rRNA binding proteins, this protein initially binds near the 5'-end of the 23S rRNA. It is important during the early stages of 50S assembly. It makes multiple contacts with different domains of the 23S rRNA in the assembled 50S subunit and ribosome. Forms part of the polypeptide exit tunnel. The sequence is that of Large ribosomal subunit protein uL4 from Acinetobacter baumannii (strain AB307-0294).